Here is a 191-residue protein sequence, read N- to C-terminus: Elongation factor P (191 aa).

The protein belongs to the elongation factor P family.

Its subcellular location is the cytoplasm. It functions in the pathway protein biosynthesis; polypeptide chain elongation. Involved in peptide bond synthesis. Stimulates efficient translation and peptide-bond synthesis on native or reconstituted 70S ribosomes in vitro. Probably functions indirectly by altering the affinity of the ribosome for aminoacyl-tRNA, thus increasing their reactivity as acceptors for peptidyl transferase. This chain is Elongation factor P, found in Ralstonia pickettii (strain 12J).